Here is an 88-residue protein sequence, read N- to C-terminus: MLKPSINEVLEKIDNRYYLVGTVSKRARKLIDGEEPYVSNKTKEKPVCVATKEVASGKITYRLLTEEEIEIEEARHHAEQHQQISEEE.

Belongs to the RNA polymerase subunit omega family. As to quaternary structure, the RNAP catalytic core consists of 2 alpha, 1 beta, 1 beta' and 1 omega subunit. When a sigma factor is associated with the core the holoenzyme is formed, which can initiate transcription.

It carries out the reaction RNA(n) + a ribonucleoside 5'-triphosphate = RNA(n+1) + diphosphate. In terms of biological role, promotes RNA polymerase assembly. Latches the N- and C-terminal regions of the beta' subunit thereby facilitating its interaction with the beta and alpha subunits. This is DNA-directed RNA polymerase subunit omega from Clostridioides difficile (strain 630) (Peptoclostridium difficile).